The primary structure comprises 130 residues: MSMQDPIADMLTRIRNGQAANKVAVTMPSSKLKVAIANVLKEEGYIEDFKIEGDTKPVLELELKYFQGKAVVESIQRVSRPGLRIYKRKDELPKVMAGLGIAVVSTSKGVMTDRAARQAGLGGEIICYVA.

The protein belongs to the universal ribosomal protein uS8 family. In terms of assembly, part of the 30S ribosomal subunit. Contacts proteins S5 and S12.

Functionally, one of the primary rRNA binding proteins, it binds directly to 16S rRNA central domain where it helps coordinate assembly of the platform of the 30S subunit. The polypeptide is Small ribosomal subunit protein uS8 (Pectobacterium carotovorum subsp. carotovorum (strain PC1)).